A 96-amino-acid chain; its full sequence is MSRRTKKVGLTGKYGTRYGSSLRKQIKKIELMQHAKYLCTFCGKTATKRTCVGIWKCKKCKRKVCGGAWSLTTPAAVAAKSTIIRLRKQKEEAQKS.

The segment at 39–60 adopts a C4-type zinc-finger fold; it reads CTFCGKTATKRTCVGIWKCKKC.

The protein belongs to the eukaryotic ribosomal protein eL43 family. As to quaternary structure, component of the large ribosomal subunit. Mature ribosomes consist of a small (40S) and a large (60S) subunit. The 40S subunit contains about 32 different proteins and 1 molecule of RNA (18S). The 60S subunit contains about 42 different proteins and 3 molecules of RNA (28S, 5.8S and 5S).

The protein localises to the cytoplasm. In terms of biological role, component of the ribosome, a large ribonucleoprotein complex responsible for the synthesis of proteins in the cell. The small ribosomal subunit (SSU) binds messenger RNAs (mRNAs) and translates the encoded message by selecting cognate aminoacyl-transfer RNA (tRNA) molecules. The large subunit (LSU) contains the ribosomal catalytic site termed the peptidyl transferase center (PTC), which catalyzes the formation of peptide bonds, thereby polymerizing the amino acids delivered by tRNAs into a polypeptide chain. The nascent polypeptides leave the ribosome through a tunnel in the LSU and interact with protein factors that function in enzymatic processing, targeting, and the membrane insertion of nascent chains at the exit of the ribosomal tunnel. This is Large ribosomal subunit protein eL43 from Plasmodium falciparum (isolate 3D7).